We begin with the raw amino-acid sequence, 241 residues long: Small ribosomal subunit protein uS2 (241 aa).

It belongs to the universal ribosomal protein uS2 family.

This is Small ribosomal subunit protein uS2 from Citrobacter koseri (strain ATCC BAA-895 / CDC 4225-83 / SGSC4696).